The chain runs to 320 residues: Retron Ec86 reverse transcriptase (320 aa).

The Reverse transcriptase domain maps to 34 to 248 (VETLRLLIYT…SQRKVTGLVI (215 aa)). The Mg(2+) site is built by D119, D197, and D198. Positions 230–320 (KKTCISGPRS…GKNPLNKAKT (91 aa)) are necessary and required for recognition and binding of RNA.

The protein belongs to the bacterial reverse transcriptase family.

It catalyses the reaction DNA(n) + a 2'-deoxyribonucleoside 5'-triphosphate = DNA(n+1) + diphosphate. Functionally, reverse transcriptase (RT) component of antiviral defense system retron Ec86, composed of a non-coding RNA (ncRNA), a ribosyltransferase/DNA-binding protein and this RT. Expression of the 3-gene retron confers protection against bacteriophage T5. At multiplicity of infection (MOI) of 0.02 cultures grow normally when infected with T5 without collapsing, at MOI 2 cultures enter growth stasis. Responsible for synthesis of msDNA (a branched molecule with RNA linked by a 2',5'-phosphodiester bond to ssDNA). The retron transcript serves as primer (from a conserved internal G residue) and template for the reaction, and codes for the RT. Recognizes only its cognate RNA as a primer template. Overexpression of the ncRNA and RT (without the ribosyltransferase), which leads to increased levels of msDNA, is mutagenic in vivo. This may be due to a mismatch in the msDNA stem which binds and sequesters MutS and/or MutL. The sequence is that of Retron Ec86 reverse transcriptase from Escherichia coli.